The primary structure comprises 268 residues: Glucosamine-6-phosphate deaminase (268 aa).

Catalysis depends on Asp-72, which acts as the Proton acceptor; for enolization step. The active-site For ring-opening step is Asp-141. The active-site Proton acceptor; for ring-opening step is the His-143. The active-site For ring-opening step is the Glu-148.

Belongs to the glucosamine/galactosamine-6-phosphate isomerase family. NagB subfamily. Homohexamer.

The catalysed reaction is alpha-D-glucosamine 6-phosphate + H2O = beta-D-fructose 6-phosphate + NH4(+). It functions in the pathway amino-sugar metabolism; N-acetylneuraminate degradation; D-fructose 6-phosphate from N-acetylneuraminate: step 5/5. With respect to regulation, allosterically activated by N-acetylglucosamine 6-phosphate (GlcNAc6P). In terms of biological role, catalyzes the reversible isomerization-deamination of glucosamine 6-phosphate (GlcN6P) to form fructose 6-phosphate (Fru6P) and ammonium ion. The protein is Glucosamine-6-phosphate deaminase of Histophilus somni (strain 2336) (Haemophilus somnus).